The sequence spans 165 residues: Large ribosomal subunit protein uL10 (165 aa).

The protein belongs to the universal ribosomal protein uL10 family. Part of the ribosomal stalk of the 50S ribosomal subunit. The N-terminus interacts with L11 and the large rRNA to form the base of the stalk. The C-terminus forms an elongated spine to which L12 dimers bind in a sequential fashion forming a multimeric L10(L12)X complex.

Functionally, forms part of the ribosomal stalk, playing a central role in the interaction of the ribosome with GTP-bound translation factors. This Borrelia turicatae (strain 91E135) protein is Large ribosomal subunit protein uL10.